Here is a 507-residue protein sequence, read N- to C-terminus: ATP synthase subunit alpha (507 aa).

170 to 177 serves as a coordination point for ATP; sequence GDRQTGKT.

The protein belongs to the ATPase alpha/beta chains family. F-type ATPases have 2 components, CF(1) - the catalytic core - and CF(0) - the membrane proton channel. CF(1) has five subunits: alpha(3), beta(3), gamma(1), delta(1), epsilon(1). CF(0) has three main subunits: a(1), b(2) and c(9-12). The alpha and beta chains form an alternating ring which encloses part of the gamma chain. CF(1) is attached to CF(0) by a central stalk formed by the gamma and epsilon chains, while a peripheral stalk is formed by the delta and b chains.

Its subcellular location is the cell inner membrane. The enzyme catalyses ATP + H2O + 4 H(+)(in) = ADP + phosphate + 5 H(+)(out). Its function is as follows. Produces ATP from ADP in the presence of a proton gradient across the membrane. The alpha chain is a regulatory subunit. This Fervidobacterium nodosum (strain ATCC 35602 / DSM 5306 / Rt17-B1) protein is ATP synthase subunit alpha.